A 502-amino-acid chain; its full sequence is Nucleoside transporter 2 (502 aa).

The Cytoplasmic segment spans residues 1-30 (MTTSSDSAMVNHTPSPWYKFGFKSFAEFNT). A helical membrane pass occupies residues 31 to 51 (YVTFVFLGMSIMMVASAVTSA). Residues 52-81 (PDFLTRYYVYATGDPDAVAETPLFWNNANT) are Extracellular-facing. Residues 82-102 (FYNAGTYVLQVLTELFSLTPF) traverse the membrane as a helical segment. The Cytoplasmic segment spans residues 103-111 (MRRIPLSVR). Residues 112–132 (LFVGLGIPFAELLLIIIVPAA) form a helical membrane-spanning segment. Residues 133–137 (TIKSQ) lie on the Extracellular side of the membrane. The helical transmembrane segment at 138–158 (HGAIAVIMVVACVGGFSKALC) threads the bilayer. At 159 to 178 (DSCTNALVGPFPTKFMNGAQ) the chain is on the cytoplasmic side. The chain crosses the membrane as a helical span at residues 179–199 (WGLTVIALLMSIIQIILKVSM). Residues 200–210 (GTSFHDILTMS) are Extracellular-facing. The helical transmembrane segment at 211 to 231 (RIYFGICIGIQLFAIFELAIL) threads the bilayer. The Cytoplasmic portion of the chain corresponds to 232–352 (RFNPFAQKYI…SVFKRVYPML (121 aa)). The tract at residues 252-273 (AQNNESTLEETAPSMNEPAAGD) is disordered. The chain crosses the membrane as a helical span at residues 353 to 373 (VCVFLIYFTSLLTFPGVFFLV). Residues 374 to 380 (STTSGWY) lie on the Extracellular side of the membrane. A helical membrane pass occupies residues 381 to 401 (MTVIVTLFNAGDFISRMVLMF). The Cytoplasmic portion of the chain corresponds to 402–408 (RPLRPSP). A helical transmembrane segment spans residues 409-429 (KVVVAGTLGRLIIIPFLVLCV). At 430–436 (RGIIRGE) the chain is on the extracellular side. The chain crosses the membrane as a helical span at residues 437–457 (ALPYVLITLLGLTNGYFGCMA). Topologically, residues 458–477 (CIHCPRTTTLRYAGERSLAA) are cytoplasmic. The helical transmembrane segment at 478-498 (MLSGISIMLGLCFGSNLSLAI) threads the bilayer. Over 499-502 (TLTH) the chain is Extracellular.

This sequence belongs to the SLC29A/ENT transporter (TC 2.A.57) family.

Its subcellular location is the cell membrane. It catalyses the reaction inosine(in) = inosine(out). It carries out the reaction guanosine(in) = guanosine(out). High affinity transporter for inosine and guanosine. The protein is Nucleoside transporter 2 of Crithidia fasciculata.